Here is a 346-residue protein sequence, read N- to C-terminus: Inositol 2-dehydrogenase (346 aa).

It belongs to the Gfo/Idh/MocA family. In terms of assembly, homotetramer.

It catalyses the reaction myo-inositol + NAD(+) = scyllo-inosose + NADH + H(+). In terms of biological role, involved in the oxidation of myo-inositol (MI) to 2-keto-myo-inositol (2KMI or 2-inosose). This chain is Inositol 2-dehydrogenase, found in Rhodococcus erythropolis (strain PR4 / NBRC 100887).